We begin with the raw amino-acid sequence, 158 residues long: Transcription elongation factor GreA (158 aa).

Positions 3-75 form a coiled coil; sequence TEKTYPMTQE…TQLENMIRNA (73 aa).

It belongs to the GreA/GreB family.

Functionally, necessary for efficient RNA polymerase transcription elongation past template-encoded arresting sites. The arresting sites in DNA have the property of trapping a certain fraction of elongating RNA polymerases that pass through, resulting in locked ternary complexes. Cleavage of the nascent transcript by cleavage factors such as GreA or GreB allows the resumption of elongation from the new 3'terminus. GreA releases sequences of 2 to 3 nucleotides. The sequence is that of Transcription elongation factor GreA from Bacillus cytotoxicus (strain DSM 22905 / CIP 110041 / 391-98 / NVH 391-98).